We begin with the raw amino-acid sequence, 840 residues long: E3 ubiquitin-protein ligase RNF19A (840 aa).

The segment at 40–61 is disordered; the sequence is SDRDLQSSTSSVSLPSVKKAPK. The span at 45-56 shows a compositional bias: low complexity; it reads QSSTSSVSLPSV. A TRIAD supradomain region spans residues 128 to 351; that stretch reads DFIECPLCLL…LSPSGCTFWG (224 aa). Cysteine 132, cysteine 135, cysteine 150, histidine 152, cysteine 155, cysteine 158, cysteine 176, cysteine 179, cysteine 219, cysteine 224, cysteine 241, cysteine 246, cysteine 251, cysteine 254, histidine 259, cysteine 264, cysteine 301, and cysteine 304 together coordinate Zn(2+). The RING-type 1 zinc-finger motif lies at 132–179; sequence CPLCLLRHSKDRFPDIMTCHHRSCVDCLRQYLRIEISESRVNISCPEC. An IBR-type zinc finger spans residues 199–264; that stretch reads EKYEEFMLRR…KQIWHPNQTC (66 aa). The RING-type 2; atypical zinc finger occupies 301–332; sequence CPRCAAYIIKMNDGSCNHMTCAVCGCEFCWLC. Cysteine 316 is a catalytic residue. 6 residues coordinate Zn(2+): cysteine 321, cysteine 324, cysteine 329, cysteine 332, histidine 340, and cysteine 347. A run of 2 helical transmembrane segments spans residues 368–388 and 424–444; these read LVGA…AMII and VIVS…IMLA. 3 disordered regions span residues 625–685, 700–721, and 786–808; these read FKFR…GNMK, QQST…PSVA, and CSDV…GGKP. Serine 631 is modified (phosphoserine). The interaction with CASR stretch occupies residues 660-840; that stretch reads ATKWSKEATG…DLKVAVQTEI (181 aa). Basic residues predominate over residues 671–683; it reads KKSKSGKLRKKGN. Positions 700-717 are enriched in polar residues; the sequence is QQSTNSSEFEAPSLSDSM.

Belongs to the RBR family. RNF19 subfamily. As to quaternary structure, interacts with UBE2L3 and UBE2L6. Also interacts with transcription factor Sp1. Interacts with SNCAIP and CASR. Interacts with VCP.

The protein localises to the membrane. The protein resides in the cytoplasm. It localises to the cytoskeleton. Its subcellular location is the microtubule organizing center. It is found in the centrosome. It catalyses the reaction [E2 ubiquitin-conjugating enzyme]-S-ubiquitinyl-L-cysteine + [acceptor protein]-L-lysine = [E2 ubiquitin-conjugating enzyme]-L-cysteine + [acceptor protein]-N(6)-ubiquitinyl-L-lysine.. It participates in protein modification; protein ubiquitination. Its function is as follows. E3 ubiquitin-protein ligase which accepts ubiquitin from E2 ubiquitin-conjugating enzymes UBE2L3 and UBE2L6 in the form of a thioester and then directly transfers the ubiquitin to targeted substrates, such as SNCAIP or CASR. The protein is E3 ubiquitin-protein ligase RNF19A (Rnf19a) of Mus musculus (Mouse).